Consider the following 211-residue polypeptide: MRDPVETYMNLVPMVVEQTNRGERAYDIFSRLLKERIIFVTGPVEDNMSMLVVAQLLFLEADNPKKEISMYINSPGGVVTSGLAIYDTMQFIRPPVATLCTGQAASMGSLLLAAGEKDMRHALPNARIMVHQPSGGFQGQATDIMLHAQEILNLKKRLNEIYVKHTGQTYKAIEDALERDKFLTADMARDFGLVDKVIDKRAEEPAAPKAS.

S106 (nucleophile) is an active-site residue. H131 is a catalytic residue.

The protein belongs to the peptidase S14 family. As to quaternary structure, fourteen ClpP subunits assemble into 2 heptameric rings which stack back to back to give a disk-like structure with a central cavity, resembling the structure of eukaryotic proteasomes.

It localises to the cytoplasm. The enzyme catalyses Hydrolysis of proteins to small peptides in the presence of ATP and magnesium. alpha-casein is the usual test substrate. In the absence of ATP, only oligopeptides shorter than five residues are hydrolyzed (such as succinyl-Leu-Tyr-|-NHMec, and Leu-Tyr-Leu-|-Tyr-Trp, in which cleavage of the -Tyr-|-Leu- and -Tyr-|-Trp bonds also occurs).. In terms of biological role, cleaves peptides in various proteins in a process that requires ATP hydrolysis. Has a chymotrypsin-like activity. Plays a major role in the degradation of misfolded proteins. The chain is ATP-dependent Clp protease proteolytic subunit from Nitrobacter hamburgensis (strain DSM 10229 / NCIMB 13809 / X14).